The chain runs to 235 residues: Pro-opiomelanocortin (235 aa).

The signal sequence occupies residues 1–26; sequence MPRFCNSRSGALLLALLLQTSIDVWS. Phe87 is subject to Phenylalanine amide. The tract at residues 88–128 is disordered; sequence GPRNSSSAGGSAQRRAEEETAGGDGRPEPSPREGKRSYSME. Over residues 112-128 the composition is skewed to basic and acidic residues; it reads GRPEPSPREGKRSYSME. The residue at position 124 (Ser124) is an N-acetylserine; in Corticotropin. At Val136 the chain carries Valine amide. Residue Asn152 is glycosylated (N-linked (GlcNAc...) asparagine). Ser154 bears the Phosphoserine mark. A disordered region spans residues 169–209; it reads EQPDGLEQVLEPDTEKADGPYRVEHFRWGNPPKDKRYGGFM. Residues 181 to 205 show a composition bias toward basic and acidic residues; sequence DTEKADGPYRVEHFRWGNPPKDKRY.

It belongs to the POMC family. Post-translationally, specific enzymatic cleavages at paired basic residues yield the different active peptides. As to expression, ACTH and MSH are produced by the pituitary gland.

The protein resides in the secreted. Stimulates the adrenal glands to release cortisol. Its function is as follows. Anorexigenic peptide. Increases the pigmentation of skin by increasing melanin production in melanocytes. In terms of biological role, increases the pigmentation of skin by increasing melanin production in melanocytes. Functionally, endogenous orexigenic opiate. Endogenous opiate. The polypeptide is Pro-opiomelanocortin (Pomc) (Rattus norvegicus (Rat)).